The chain runs to 1770 residues: MPRRRKNLGGNPFRKTANPKEVVVSSVASREEPTTTLPSMGETKVDQEELFTSISEIFSDLDPDVVYLMLSECDFKVENAMDCLLELSATDTKIEESSSQSFVASENQVGAAESKIMEKRPEEESEDSKMDSFLDMQLTEDLDSLIQNAFEKLNSSPDDQVYSFLPSQDVNSFNDSSEFINPDSSNMTPIFSTQNMNLNGENLENSGSTLSLNPLPSHSVLNESKCFIKDNTLALESNYPEDSLLSSSLNVASDSIAGCSSLNQKQKELLESECVEAQFSEAPVDLDASEPQACLNLPGLDLPGTGGDQKSTRVSDVFLPSEGFNFKPHKHPELPTKGKDVSYCPVLAPLPLLLPPPPPPPMWNPMIPAFDLFQGNHGFVAPVVTTAAHWRSVNYTFPPSVISHTSPTKVWRNKDGTSAYQVQETPVSQVVRKKTSYVGLVLVLLRGLPGSGKSFLARTLQEDNPSGVILSTDDYFYINGQYQFDVKYLGEAHEWNQNRAKEAFEKKISPIIIDNTNLQAWEMKPYVALSQKHKYKVLFREPDTWWKFKPKELARRNIHGVSKEKITRMLEHYQRFVSVPIIMSSSVPEKIERIELCAYSCEDRSTSPRDDEDIISEKEENILSLSLKHLEFTEEKNLDVTKETMLPENVAYLSNADLNKRRKEISDMNPSIQSALILETPHMYFSDSESKLQATDKSENEQIEMVAVKGYSKTDTDSSMERVSPSTCCSENNQEDCDLANSGPLQNEKSSPGEIVEERATVTKKAFGKQKSKSTLEKFPRHELSNFVGDWPVDKTIGQRTKRNRKTEKTSSVQSDKKYNYPQSHKLVNSVSVNTDCVQQRGSPHESVEDGRKSQCDDASEPLNSYKYDAYKNIDKNSFNIMGDWPSSDSLAQREHRSRMPKTGLSEPNLEIGTNDKMNEISLSTAHEACWGTSSQKLKTLGSSNLGSSEMLLSEMTCESQTCLSKKSHGQHTSLPLTFTNSAPTVSGVVEPQTLAECQEQMPKRDPGKEVGMCTQTEPQDFALLWKIEKNKISISDSIKVLTGRLDGFKPKVFNINTKSDVQEAIPYRVMYDKSTFVEESELTSADESENLNILCKLFGSFSLEALKDLYERCNKDIIWATSLLLDSETKLCEDTEFENFQKSCDGSQIGPFSLGLNLKEIISQRGTLENSNSPVPEFSHGIGISNADSQSTCDAERGNSEQAEMRAVTPENHESMTSIFPSAAVGLKNNNDILPNSQEELLYSSKQSFPGILKATTPKDMSETEKNLVVTETGDNIHSPSHFSDIFNFVSSTSNLELNEEIYFTDSLEIKRNENFPKDYVKFSDEEEFMNEDEKEMKEILMAGSSLSAGVSGEDKTEILNPTPAMAKSLTIDCLELALPPELAFQLNELFGPVGIDSGSLTVEDCVVHIDLNLAKVIHEKWKESVMERQRQEEVSCGKFMQDPSLVGHTGLDNPEQKSSQRTGKKLLKTLTASEMLPLLDHWNTQTKKVSLREIMSEEIALQEKHNLKRETLMFEKDCATKLKEKQLFKIFPAINQNFLVDIFKDHNYSLEHTVQFLNCVLEGDPVKTVVAQEFVHQNENVTSHTGQKSKEKKPKKLKETEETPSELSFQDFEYPDYDDYRAEAFLHQQKRMECYSKAKEAYRIGKKNVATFYAQQGTLHEQKMKEANHLAAIEIFEKVNASLLPQNVLDLHGLHVDEALEHLMRVLEKKTEEFKQNGGKPYLSVITGRGNHSQGGVARIKPAVIKYLISHSFRFSEIKPGCLKVMLK.

The interval Met1 to Met40 is disordered. Positions Asp46–Ala89 constitute a CUE domain. 2 coiled-coil regions span residues Thr90–Ser177 and His218–Cys259. Residues Glu95–Lys129 form a disordered region. Over residues Ser97 to Gln108 the composition is skewed to polar residues. Residues Lys115–Lys129 show a composition bias toward basic and acidic residues. Residue Gly447–Ser454 coordinates ATP. Disordered stretches follow at residues Ser712–Val756, Lys795–Pro822, Asp836–Pro862, and Ser890–Gly913. Over residues Ser843–Cys856 the composition is skewed to basic and acidic residues. The residue at position 906 (Ser906) is a Phosphoserine. The residue at position 1210 (Thr1210) is a Phosphothreonine. A disordered region spans residues Asn1580–Pro1606. The Smr domain occupies Leu1691 to Lys1770.

As to quaternary structure, binds NEDD4. Binds BCL3 and CREBBP. Post-translationally, ubiquitinated; this targets the protein for degradation by the proteasome.

Its subcellular location is the cytoplasm. Functionally, has 5'-polynucleotide kinase and nicking endonuclease activity. May play a role in DNA repair or recombination. In Homo sapiens (Human), this protein is NEDD4-binding protein 2 (N4BP2).